The chain runs to 125 residues: uncharacterized protein (125 aa).

2 helical membrane-spanning segments follow: residues 28-48 (VFIT…SQFC) and 54-74 (FFLP…LFFF).

The protein resides in the membrane. This is an uncharacterized protein from Saccharomyces cerevisiae (strain ATCC 204508 / S288c) (Baker's yeast).